Here is a 138-residue protein sequence, read N- to C-terminus: Small ribosomal subunit protein uS17 (138 aa).

Composition is skewed to basic and acidic residues over residues 1 to 18 and 43 to 55; these read MSEE…RAEA and AFDR…QKDT. The interval 1-62 is disordered; it reads MSEEERNRGA…KDTRRGRRKE (62 aa).

Belongs to the universal ribosomal protein uS17 family. As to quaternary structure, part of the 30S ribosomal subunit.

Functionally, one of the primary rRNA binding proteins, it binds specifically to the 5'-end of 16S ribosomal RNA. In Rubrobacter xylanophilus (strain DSM 9941 / JCM 11954 / NBRC 16129 / PRD-1), this protein is Small ribosomal subunit protein uS17.